The sequence spans 132 residues: UPF0102 protein Achl_2213 (132 aa).

It belongs to the UPF0102 family.

This chain is UPF0102 protein Achl_2213, found in Pseudarthrobacter chlorophenolicus (strain ATCC 700700 / DSM 12829 / CIP 107037 / JCM 12360 / KCTC 9906 / NCIMB 13794 / A6) (Arthrobacter chlorophenolicus).